The chain runs to 287 residues: Proteasome assembly chaperone 1 (287 aa).

Residues 1–32 (MATFFGEVQSVFSRAVDEDDEEEEGEEEEEDR) form a disordered region. Acidic residues predominate over residues 17-32 (DEDDEEEEGEEEEEDR).

Belongs to the PSMG1 family. As to quaternary structure, forms a heterodimer with psmg2. Post-translationally, degraded by the proteasome upon completion of 20S proteasome maturation.

The protein localises to the cytoplasm. The protein resides in the endoplasmic reticulum. Chaperone protein which promotes assembly of the 20S proteasome as part of a heterodimer with psmg2. The protein is Proteasome assembly chaperone 1 of Xenopus tropicalis (Western clawed frog).